Consider the following 389-residue polypeptide: Phospho-N-acetylmuramoyl-pentapeptide-transferase (389 aa).

The next 10 helical transmembrane spans lie at 25 to 45, 73 to 93, 97 to 117, 134 to 154, 190 to 210, 222 to 242, 258 to 278, 286 to 306, 311 to 331, and 366 to 386; these read RAVM…PWVI, TMGG…WADL, FIWI…VDDY, FFWQ…SVSE, VSYP…IVGS, GLVI…AYVM, GAGE…AFLW, VFMG…IAVI, IVLF…MLQV, and QVVV…LSSL.

It belongs to the glycosyltransferase 4 family. MraY subfamily. Requires Mg(2+) as cofactor.

The protein resides in the cell inner membrane. It catalyses the reaction UDP-N-acetyl-alpha-D-muramoyl-L-alanyl-gamma-D-glutamyl-meso-2,6-diaminopimeloyl-D-alanyl-D-alanine + di-trans,octa-cis-undecaprenyl phosphate = di-trans,octa-cis-undecaprenyl diphospho-N-acetyl-alpha-D-muramoyl-L-alanyl-D-glutamyl-meso-2,6-diaminopimeloyl-D-alanyl-D-alanine + UMP. Its pathway is cell wall biogenesis; peptidoglycan biosynthesis. Its function is as follows. Catalyzes the initial step of the lipid cycle reactions in the biosynthesis of the cell wall peptidoglycan: transfers peptidoglycan precursor phospho-MurNAc-pentapeptide from UDP-MurNAc-pentapeptide onto the lipid carrier undecaprenyl phosphate, yielding undecaprenyl-pyrophosphoryl-MurNAc-pentapeptide, known as lipid I. The chain is Phospho-N-acetylmuramoyl-pentapeptide-transferase from Polynucleobacter necessarius subsp. necessarius (strain STIR1).